The chain runs to 511 residues: Histidine ammonia-lyase (511 aa).

Residues 144 to 146 (ASG) constitute a cross-link (5-imidazolinone (Ala-Gly)). Position 145 is a 2,3-didehydroalanine (Ser) (S145).

Belongs to the PAL/histidase family. In terms of processing, contains an active site 4-methylidene-imidazol-5-one (MIO), which is formed autocatalytically by cyclization and dehydration of residues Ala-Ser-Gly.

It localises to the cytoplasm. The enzyme catalyses L-histidine = trans-urocanate + NH4(+). It functions in the pathway amino-acid degradation; L-histidine degradation into L-glutamate; N-formimidoyl-L-glutamate from L-histidine: step 1/3. This Halalkalibacterium halodurans (strain ATCC BAA-125 / DSM 18197 / FERM 7344 / JCM 9153 / C-125) (Bacillus halodurans) protein is Histidine ammonia-lyase.